A 638-amino-acid chain; its full sequence is Methyl-accepting chemotaxis protein McpQ (638 aa).

A helical transmembrane segment spans residues 18-38 (LGLGFGLVLLLTLAITLTGWH). In terms of domain architecture, HBM spans 45 to 282 (DRGDKLGNIS…SQTEVRDAAA (238 aa)). The chain crosses the membrane as a helical span at residues 287–307 (TLLTVATVLALALGLLAAWAI). An HAMP domain is found at 309–361 (RQIIIPLRQTLRAAERVASGDLTQSLQVQRRDELGQLQASMHRMTQGLRELIG). In terms of domain architecture, Methyl-accepting transducer spans 366–602 (GVTQIASAAE…EINRSVMNVR (237 aa)).

The protein belongs to the methyl-accepting chemotaxis (MCP) protein family.

It localises to the cell membrane. In terms of biological role, chemotactic-signal transducers respond to changes in the concentration of attractants and repellents in the environment, transduce a signal from the outside to the inside of the cell, and facilitate sensory adaptation through the variation of the level of methylation. McpQ recognizes specifically citrate and citrate/metal(2+) complexes. Binds citrate/metal(2+) complexes with higher affinity than free citrate, and mediates preferentially chemotaxis toward citrate/metal(2+) complexes. The polypeptide is Methyl-accepting chemotaxis protein McpQ (Pseudomonas putida (strain ATCC 47054 / DSM 6125 / CFBP 8728 / NCIMB 11950 / KT2440)).